The sequence spans 447 residues: uncharacterized protein (447 aa).

This sequence belongs to the class-II fumarase/aspartase family.

Its subcellular location is the cytoplasm. It localises to the nucleus. This is an uncharacterized protein from Schizosaccharomyces pombe (strain 972 / ATCC 24843) (Fission yeast).